The following is a 442-amino-acid chain: tRNA modification GTPase MnmE (442 aa).

(6S)-5-formyl-5,6,7,8-tetrahydrofolate is bound by residues Arg-27, Glu-84, and Lys-124. The TrmE-type G domain maps to 221-366 (GLHVVIVGAP…LLDALQAFAE (146 aa)). Residues 231 to 236 (NAGKSS), 250 to 256 (SKEAGTT), and 275 to 278 (DTAG) contribute to the GTP site. Positions 235 and 256 each coordinate Mg(2+). (6S)-5-formyl-5,6,7,8-tetrahydrofolate is bound at residue Lys-442.

The protein belongs to the TRAFAC class TrmE-Era-EngA-EngB-Septin-like GTPase superfamily. TrmE GTPase family. In terms of assembly, homodimer. Heterotetramer of two MnmE and two MnmG subunits. K(+) serves as cofactor.

The protein resides in the cytoplasm. Exhibits a very high intrinsic GTPase hydrolysis rate. Involved in the addition of a carboxymethylaminomethyl (cmnm) group at the wobble position (U34) of certain tRNAs, forming tRNA-cmnm(5)s(2)U34. The chain is tRNA modification GTPase MnmE from Brucella suis biovar 1 (strain 1330).